The primary structure comprises 156 residues: MFLTEDLITFNLRNFLLFQLWESSFSPGAGGFCTTLPPSFLRVDDRATSSTTDSSRAPSSPRPPGSTSHCGISTRCTERCLCVLPLRTSQVPDVMAPQHDQEKFHDLAYSCLGKSFSMSNQDLYGYSTSSLALGLAWLSWETKKKNVLHLVGLDSL.

The tract at residues 46-71 (RATSSTTDSSRAPSSPRPPGSTSHCG) is disordered. Residues 48–59 (TSSTTDSSRAPS) are compositionally biased toward low complexity.

In terms of tissue distribution, expressed throughout the brain in the thalamus, subthalamic nucleus, corpus callosum, hippocampus, substantia nigra, caudate nucleus, and amygdala.

The protein localises to the nucleus. Its function is as follows. May play a role in FOS signaling pathways involved in development and remodeling of neurons. Promotes transcription of the FOS promoter. This Homo sapiens (Human) protein is Protein CROC-4.